A 244-amino-acid chain; its full sequence is Lytic polysaccharide monooxygenase-like protein ANIA_04702 (244 aa).

The N-terminal stretch at 1 to 23 (MLMSTSPSPWLAAAMLCIGLANA) is a signal peptide. Histidine 24 serves as a coordination point for Cu(2+). Methylhistidine is present on histidine 24. Residues asparagine 57, asparagine 80, asparagine 118, asparagine 159, asparagine 192, and asparagine 198 are each glycosylated (N-linked (GlcNAc...) asparagine). Disulfide bonds link cysteine 72/cysteine 177 and cysteine 142/cysteine 196. Asparagine 215 carries GPI-anchor amidated asparagine lipidation. Positions 216 to 244 (AGLEAVTVPSFLTAVVPTFLGIAYGLLMA) are cleaved as a propeptide — removed in mature form.

This sequence belongs to the X325 family. It depends on Cu(2+) as a cofactor. Post-translationally, the catalytically essential N-terminal histidine His-24 is post-translationally modified by methylation to prevent protonation of the histidine side chain, and protect the critical active site of the enzyme from oxidative damage.

It is found in the cell membrane. Its function is as follows. Lytic polysaccharide monooxygenase-like protein that has diverged to biological functions other than polysaccharide degradation since it does not perform oxidative cleavage of polysaccharides. Acts as a cell surface-bound protein that functions in the copper-accumulation pathway. May also act as the major cell wall sensor that regulates MAP kinase-dependent hyphal anastomosis, the fusion of hyphal cells. The polypeptide is Lytic polysaccharide monooxygenase-like protein ANIA_04702 (Emericella nidulans (strain FGSC A4 / ATCC 38163 / CBS 112.46 / NRRL 194 / M139) (Aspergillus nidulans)).